A 90-amino-acid chain; its full sequence is Probable Fe(2+)-trafficking protein (90 aa).

It belongs to the Fe(2+)-trafficking protein family.

In terms of biological role, could be a mediator in iron transactions between iron acquisition and iron-requiring processes, such as synthesis and/or repair of Fe-S clusters in biosynthetic enzymes. The polypeptide is Probable Fe(2+)-trafficking protein (Coxiella burnetii (strain CbuK_Q154) (Coxiella burnetii (strain Q154))).